A 363-amino-acid polypeptide reads, in one-letter code: GDP-fucose transporter (363 aa).

The next 8 helical transmembrane spans lie at 30–47, 62–79, 126–148, 152–171, 180–202, 222–244, 251–273, and 307–326; these read VITA…LVFL, FITW…LFLS, VSFY…YLIL, TSGQ…LLGV, LSYT…AIYT, LNAL…VFYF, TFWI…TGWQ, and LLWW…YTYV. A disordered region spans residues 334–363; it reads KNSGASPASEAKSDKVKLLGRDGNAAEESV. The segment covering 344-353 has biased composition (basic and acidic residues); it reads AKSDKVKLLG.

It belongs to the TPT transporter family. SLC35C subfamily.

It localises to the golgi apparatus membrane. Involved in GDP-fucose import from the cytoplasm into the Golgi lumen. The polypeptide is GDP-fucose transporter (Caenorhabditis elegans).